Consider the following 218-residue polypeptide: tRNA (guanine-N(7)-)-methyltransferase (218 aa).

The interval 1–26 (MRLKNKPWANELVEEHPESALDRPDP) is disordered. The segment covering 13–26 (VEEHPESALDRPDP) has biased composition (basic and acidic residues). S-adenosyl-L-methionine-binding residues include Glu45, Glu70, Asp97, and Asp119. Asp119 is a catalytic residue. Substrate is bound at residue Lys123. The segment at 125 to 130 (RHEKRR) is interaction with RNA. Residues Asp155 and 195 to 198 (TEYE) contribute to the substrate site.

It belongs to the class I-like SAM-binding methyltransferase superfamily. TrmB family.

It catalyses the reaction guanosine(46) in tRNA + S-adenosyl-L-methionine = N(7)-methylguanosine(46) in tRNA + S-adenosyl-L-homocysteine. Its pathway is tRNA modification; N(7)-methylguanine-tRNA biosynthesis. Catalyzes the formation of N(7)-methylguanine at position 46 (m7G46) in tRNA. This Lactobacillus delbrueckii subsp. bulgaricus (strain ATCC 11842 / DSM 20081 / BCRC 10696 / JCM 1002 / NBRC 13953 / NCIMB 11778 / NCTC 12712 / WDCM 00102 / Lb 14) protein is tRNA (guanine-N(7)-)-methyltransferase.